The sequence spans 267 residues: L-erythrulose-1-phosphate isomerase (267 aa).

Catalysis depends on His95, which acts as the Electrophile. The Proton acceptor role is filled by Glu168. Substrate contacts are provided by Gly174 and Ser211.

Belongs to the triosephosphate isomerase family. In terms of assembly, homodimer.

It is found in the cytoplasm. The enzyme catalyses L-erythrulose 1-phosphate = D-erythrulose 4-phosphate. It participates in carbohydrate metabolism; erythritol degradation. Catalyzes the isomerization of D-erythrulose-4P to L-erythrulose-1P. In Rhizobium etli (strain ATCC 51251 / DSM 11541 / JCM 21823 / NBRC 15573 / CFN 42), this protein is L-erythrulose-1-phosphate isomerase.